The following is an 853-amino-acid chain: Transforming growth factor beta receptor type 3 (853 aa).

The signal sequence occupies residues Met1–Ala23. Residues Gly24–Val789 lie on the Extracellular side of the membrane. N-linked (GlcNAc...) asparagine glycans are attached at residues Asn37, Asn144, and Asn493. Cysteines 55 and 200 form a disulfide. The region spanning Lys456–Cys730 is the ZP domain. The interval Ser530–Glu559 is disordered. Residues Ser535 and Ser546 are each glycosylated (O-linked (Xyl...) (glycosaminoglycan) serine). N-linked (GlcNAc...) asparagine glycans are attached at residues Asn572, Asn591, and Asn698. Disulfide bonds link Cys640/Cys706, Cys661/Cys730, and Cys711/Cys723. An interaction with TGF-beta ligand region spans residues Met737–Pro751. Residues Met790–Tyr811 form a helical membrane-spanning segment. Over Ser812–Ala853 the chain is Cytoplasmic. Residues Arg820 to Ala836 are compositionally biased toward polar residues. The interval Arg820 to Ala853 is disordered. Over residues Ser838–Ala853 the composition is skewed to low complexity. Position 842 is a phosphothreonine (Thr842).

Forms homodimers and homooligomers. Interacts with DYNLT4. Interacts with integrin ITGA5:ITGB1; this interaction promotes the internalization and trafficking of ITGA5:ITGB1 into endocytic vesicles. Interacts with TGFB1, BMP2, BMP5, BMP7 or GDF5 and inhibin A via the ligand binding domains. Interacts with ALK3/BMPR1A; this interaction results in the cell surface retention of BMPR1A. Interacts with ALK6/BMPR1B; this interaction enhances BMPR1B-mediated stimulation of the BMP signaling pathway. Interacts with the scaffolding protein beta-arrestin2/ARRB2; this interaction mediates internalization of TGFBR3 and thus regulates migration, actin cytoskeleton and activation of CDC42. Post-translationally, extensively modified by glycosaminoglycan groups (GAG). Phosphorylated in the cytoplasmic domain by the type II receptor TGFBR2 at THR-842 to mediate recruitment of ARRB2 and subsequent internalization of TGFBR2 and TGFBR3.

Its subcellular location is the cell membrane. The protein resides in the secreted. It localises to the extracellular space. The protein localises to the extracellular matrix. In terms of biological role, cell surface receptor that regulates diverse cellular processes including cell proliferation, differentiation, migration, and apoptosis. Initiates BMP, inhibin, and TGF-beta signaling pathways by interacting with different ligands including TGFB1, BMP2, BMP5, BMP7 or GDF5. Alternatively, acts as a cell surface coreceptor for BMP ligands, serving to enhance ligand binding by differentially regulating BMPR1A/ALK3 and BMPR1B/ALK6 receptor trafficking. Promotes epithelial cell adhesion, focal adhesion formation and integrin signaling during epithelial cell spreading on fibronectin. By interacting with the scaffolding protein beta-arrestin2/ARRB2, regulates migration or actin cytoskeleton and promotes the activation of CDC42 as well as the inhibition of NF-kappa-B. In gonadotrope cells, acts as an inhibin A coreceptor and regulates follicle-stimulating hormone (FSH) levels and female fertility. Plays a role in the inhibition of directed and random cell migration in epithelial cells by altering the actin cytoskeletal organization. Participates in epithelial-mesenchymal transformation (EMT) upon binding to BMP2 or TGFB2, by activating the PAR6/SMURF1/RHOA pathway. This is Transforming growth factor beta receptor type 3 (Tgfbr3) from Rattus norvegicus (Rat).